We begin with the raw amino-acid sequence, 466 residues long: Tissue alpha-L-fucosidase (466 aa).

Positions 1–31 (MRAPGMRSRPAGPALLLLLLFLGAAESVRRA) are cleaved as a signal peptide. T170 carries the phosphothreonine modification. N241, N268, and N382 each carry an N-linked (GlcNAc...) asparagine glycan.

Belongs to the glycosyl hydrolase 29 family. In terms of assembly, homotetramer.

It localises to the lysosome. The enzyme catalyses an alpha-L-fucoside + H2O = L-fucose + an alcohol. It carries out the reaction a neolactoside IV(2)-alpha-Fuc-nLc4Cer(d18:1(4E)) + H2O = a neolactoside nLc4Cer(d18:1(4E)) + L-fucose. The catalysed reaction is a neolactoside IV(2)-alpha-Fuc-nLc4Cer(d18:0) + H2O = a neolactoside nLc4Cer(d18:0) + L-fucose. Alpha-L-fucosidase is responsible for hydrolyzing the alpha-1,6-linked fucose joined to the reducing-end N-acetylglucosamine of the carbohydrate moieties of glycoproteins. This chain is Tissue alpha-L-fucosidase, found in Homo sapiens (Human).